The primary structure comprises 124 residues: Holo-[acyl-carrier-protein] synthase (124 aa).

The Mg(2+) site is built by Asp7 and Glu55.

This sequence belongs to the P-Pant transferase superfamily. AcpS family. The cofactor is Mg(2+).

It is found in the cytoplasm. The enzyme catalyses apo-[ACP] + CoA = holo-[ACP] + adenosine 3',5'-bisphosphate + H(+). Transfers the 4'-phosphopantetheine moiety from coenzyme A to a Ser of acyl-carrier-protein. The protein is Holo-[acyl-carrier-protein] synthase of Borreliella burgdorferi (strain ATCC 35210 / DSM 4680 / CIP 102532 / B31) (Borrelia burgdorferi).